A 390-amino-acid chain; its full sequence is Probable tRNA pseudouridine synthase D (390 aa).

Catalysis depends on D93, which acts as the Nucleophile. Positions 166 to 353 (YVLNYYGIQR…YGTRRKMITP (188 aa)) constitute a TRUD domain.

The protein belongs to the pseudouridine synthase TruD family.

The catalysed reaction is uridine(13) in tRNA = pseudouridine(13) in tRNA. Functionally, could be responsible for synthesis of pseudouridine from uracil-13 in transfer RNAs. The polypeptide is Probable tRNA pseudouridine synthase D (Methanococcus maripaludis (strain C5 / ATCC BAA-1333)).